The primary structure comprises 108 residues: Thiosulfate sulfurtransferase GlpE (108 aa).

The Rhodanese domain maps to 18 to 106; that stretch reads QNEDAVLVDI…WVRSELPIEL (89 aa). The active-site Cysteine persulfide intermediate is Cys66.

The protein belongs to the GlpE family.

The protein localises to the cytoplasm. It catalyses the reaction thiosulfate + hydrogen cyanide = thiocyanate + sulfite + 2 H(+). It carries out the reaction thiosulfate + [thioredoxin]-dithiol = [thioredoxin]-disulfide + hydrogen sulfide + sulfite + 2 H(+). In terms of biological role, transferase that catalyzes the transfer of sulfur from thiosulfate to thiophilic acceptors such as cyanide or dithiols. May function in a CysM-independent thiosulfate assimilation pathway by catalyzing the conversion of thiosulfate to sulfite, which can then be used for L-cysteine biosynthesis. This is Thiosulfate sulfurtransferase GlpE from Glaesserella parasuis serovar 5 (strain SH0165) (Haemophilus parasuis).